The following is a 187-amino-acid chain: Orotate phosphoribosyltransferase (187 aa).

Residue 110–118 (EDVVTTGGS) participates in 5-phospho-alpha-D-ribose 1-diphosphate binding. Orotate-binding residues include threonine 114 and arginine 142.

It belongs to the purine/pyrimidine phosphoribosyltransferase family. PyrE subfamily. In terms of assembly, homodimer. Requires Mg(2+) as cofactor.

The catalysed reaction is orotidine 5'-phosphate + diphosphate = orotate + 5-phospho-alpha-D-ribose 1-diphosphate. It participates in pyrimidine metabolism; UMP biosynthesis via de novo pathway; UMP from orotate: step 1/2. Its function is as follows. Catalyzes the transfer of a ribosyl phosphate group from 5-phosphoribose 1-diphosphate to orotate, leading to the formation of orotidine monophosphate (OMP). In Thermotoga maritima (strain ATCC 43589 / DSM 3109 / JCM 10099 / NBRC 100826 / MSB8), this protein is Orotate phosphoribosyltransferase.